A 469-amino-acid polypeptide reads, in one-letter code: UDP-N-acetylmuramoylalanine--D-glutamate ligase (469 aa).

Position 121 to 127 (121 to 127 (GTNGKST)) interacts with ATP.

It belongs to the MurCDEF family.

It localises to the cytoplasm. The catalysed reaction is UDP-N-acetyl-alpha-D-muramoyl-L-alanine + D-glutamate + ATP = UDP-N-acetyl-alpha-D-muramoyl-L-alanyl-D-glutamate + ADP + phosphate + H(+). Its pathway is cell wall biogenesis; peptidoglycan biosynthesis. Cell wall formation. Catalyzes the addition of glutamate to the nucleotide precursor UDP-N-acetylmuramoyl-L-alanine (UMA). The sequence is that of UDP-N-acetylmuramoylalanine--D-glutamate ligase from Rhodopseudomonas palustris (strain ATCC BAA-98 / CGA009).